Reading from the N-terminus, the 407-residue chain is Probable beta-1,3-galactosyltransferase 4 (407 aa).

A helical; Signal-anchor for type II membrane protein transmembrane segment spans residues 23–39; it reads WTLFLCIGFFCAGILFS.

The protein belongs to the glycosyltransferase 31 family. It depends on Mn(2+) as a cofactor.

It is found in the golgi apparatus membrane. The protein operates within protein modification; protein glycosylation. Its function is as follows. Beta-1,3-galactosyltransferase that transfers galactose from UDP-galactose to substrates with a terminal glycosyl residue. This is Probable beta-1,3-galactosyltransferase 4 (B3GALT4) from Arabidopsis thaliana (Mouse-ear cress).